The chain runs to 310 residues: tRNA pseudouridine synthase B (310 aa).

The active-site Nucleophile is the aspartate 47.

It belongs to the pseudouridine synthase TruB family. Type 1 subfamily.

It carries out the reaction uridine(55) in tRNA = pseudouridine(55) in tRNA. Its function is as follows. Responsible for synthesis of pseudouridine from uracil-55 in the psi GC loop of transfer RNAs. In Psychromonas ingrahamii (strain DSM 17664 / CCUG 51855 / 37), this protein is tRNA pseudouridine synthase B.